The chain runs to 448 residues: MAKHPFEQFNLESSLIDAVKDLNFEKPTEIQNRIIPRILKRTNLIGQSQTGTGKSHAFLLPLMQLIDSEIKEPQAIVVAPTRELAQQLYDAANHLSQFKAGVSVKVFIGGTDIEKDRQRCNAQPQLIIGTPTRINDLAKTGHLHVHLASYLVIDEADLMIDLGLIEDVDYIAARLEDNANIAVFSATIPQQLQPFLNKYLSHPEYVAVDSKKQNKKNIEFYLIPTKGAAKVEKTLNLIDILNPYLCIIFCNSRDNANDLARSLNEAGIKVGMIHGGLTPRERKQQMKRIRNLEFQYVIASDLASRGIDIEGVSHVINFDVPNDIDFFTHRVGRTGRGNYKGVAITLYSPDEEHNISLIEDRGFVFNTVDIKDGELKEVKAHNQRQARMRKDDHLTNQVKNKVRSKIKNKVKPGYKKKFKQEVEKMKRQERKQFSKQQNRQKRKQNKKG.

Residues 4–32 (HPFEQFNLESSLIDAVKDLNFEKPTEIQN) carry the Q motif motif. In terms of domain architecture, Helicase ATP-binding spans 35–206 (IPRILKRTNL…NKYLSHPEYV (172 aa)). 48 to 55 (SQTGTGKS) contributes to the ATP binding site. The short motif at 154–157 (DEAD) is the DEAD box element. The Helicase C-terminal domain maps to 236 to 386 (NLIDILNPYL…EVKAHNQRQA (151 aa)). The segment covering 400-418 (NKVRSKIKNKVKPGYKKKF) has biased composition (basic residues). A disordered region spans residues 400–448 (NKVRSKIKNKVKPGYKKKFKQEVEKMKRQERKQFSKQQNRQKRKQNKKG). A compositionally biased stretch (basic and acidic residues) spans 419–432 (KQEVEKMKRQERKQ). The span at 438–448 (NRQKRKQNKKG) shows a compositional bias: basic residues.

It belongs to the DEAD box helicase family. CshB subfamily.

The protein localises to the cytoplasm. The catalysed reaction is ATP + H2O = ADP + phosphate + H(+). Probable DEAD-box RNA helicase. May work in conjunction with the cold shock proteins to ensure proper initiation of transcription at low and optimal temperatures. The polypeptide is DEAD-box ATP-dependent RNA helicase CshB (Staphylococcus aureus (strain NCTC 8325 / PS 47)).